Reading from the N-terminus, the 179-residue chain is Apoptosis regulator DPV022 (179 aa).

The helical transmembrane segment at 148 to 170 (VLITNYLKITIFGAILGITAYYI) threads the bilayer.

As to quaternary structure, interacts with host BAX and BAK1.

Its subcellular location is the host mitochondrion. The protein localises to the host membrane. Functionally, plays a role in the inhibition of host apoptosis by sequestering and inactivating several proapoptotic BCL-2 proteins, including BAK1 and BAX. Prevents the conformational activation of both of them. This is Apoptosis regulator DPV022 (DPV022) from Deerpox virus (strain Mule deer/United States/W-848-83/1983) (DPV).